Consider the following 510-residue polypeptide: Amidophosphoribosyltransferase (510 aa).

The Nucleophile role is filled by cysteine 2. Residues 2–239 (CGILGIALAD…PGEAVIIPKD (238 aa)) enclose the Glutamine amidotransferase type-2 domain. Residues aspartate 373 and aspartate 374 each coordinate Mg(2+).

This sequence in the C-terminal section; belongs to the purine/pyrimidine phosphoribosyltransferase family. The cofactor is Mg(2+).

The enzyme catalyses 5-phospho-beta-D-ribosylamine + L-glutamate + diphosphate = 5-phospho-alpha-D-ribose 1-diphosphate + L-glutamine + H2O. It functions in the pathway purine metabolism; IMP biosynthesis via de novo pathway; N(1)-(5-phospho-D-ribosyl)glycinamide from 5-phospho-alpha-D-ribose 1-diphosphate: step 1/2. This Lachancea kluyveri (Yeast) protein is Amidophosphoribosyltransferase (ADE4).